The following is a 1254-amino-acid chain: Ubiquitin carboxyl-terminal hydrolase 12 (1254 aa).

At Ser-84 the chain carries Phosphoserine. Residues Asn-97 to Val-199 enclose the DUSP domain. A USP domain is found at Thr-364 to Arg-1110. Catalysis depends on Cys-373, which acts as the Nucleophile. The disordered stretch occupies residues Asp-827–Ala-893. Residues Thr-854 to Thr-864 show a composition bias toward low complexity. The segment covering Arg-867 to Thr-883 has biased composition (acidic residues). His-1068 functions as the Proton acceptor in the catalytic mechanism. The residue at position 1160 (Ser-1160) is a Phosphoserine. Positions Gln-1188–Arg-1207 are disordered. The segment covering Asp-1189–Asp-1198 has biased composition (acidic residues).

It belongs to the peptidase C19 family. In terms of assembly, interacts with FZO1.

The catalysed reaction is Thiol-dependent hydrolysis of ester, thioester, amide, peptide and isopeptide bonds formed by the C-terminal Gly of ubiquitin (a 76-residue protein attached to proteins as an intracellular targeting signal).. Functionally, ubiquitin carboxyl-terminal hydrolase that recognizes ubiquitin chains that stabilize FZO1 and promote mitochondrial fusion. UBP12 deubiquitylates FZO1 only after oligomerization. The polypeptide is Ubiquitin carboxyl-terminal hydrolase 12 (UBP12) (Saccharomyces cerevisiae (strain ATCC 204508 / S288c) (Baker's yeast)).